The primary structure comprises 197 residues: MIEFVRGEVAYVCAEFVTIEVGGIGYKIVAPNPFFYRTGDEQVIVYTYHYVREDQEVLFGFRSRRERALFTKLLGVTGIGPKGSLAIVASGDVDALVEAIEQEKESYLIKFPGVGKKTAKQMTLDLKGKLAELAPDYIPSEGLFAQGNAELNEACEALTALGYSEREVEKVKKALQGEVLSTDQYVKRALQLLLNVR.

The interval 1–62 is domain I; that stretch reads MIEFVRGEVA…EDQEVLFGFR (62 aa). The tract at residues 63–141 is domain II; it reads SRRERALFTK…ELAPDYIPSE (79 aa). Positions 141–145 are flexible linker; that stretch reads EGLFA. Residues 146-197 form a domain III region; sequence QGNAELNEACEALTALGYSEREVEKVKKALQGEVLSTDQYVKRALQLLLNVR.

Belongs to the RuvA family. Homotetramer. Forms an RuvA(8)-RuvB(12)-Holliday junction (HJ) complex. HJ DNA is sandwiched between 2 RuvA tetramers; dsDNA enters through RuvA and exits via RuvB. An RuvB hexamer assembles on each DNA strand where it exits the tetramer. Each RuvB hexamer is contacted by two RuvA subunits (via domain III) on 2 adjacent RuvB subunits; this complex drives branch migration. In the full resolvosome a probable DNA-RuvA(4)-RuvB(12)-RuvC(2) complex forms which resolves the HJ.

The protein localises to the cytoplasm. The RuvA-RuvB-RuvC complex processes Holliday junction (HJ) DNA during genetic recombination and DNA repair, while the RuvA-RuvB complex plays an important role in the rescue of blocked DNA replication forks via replication fork reversal (RFR). RuvA specifically binds to HJ cruciform DNA, conferring on it an open structure. The RuvB hexamer acts as an ATP-dependent pump, pulling dsDNA into and through the RuvAB complex. HJ branch migration allows RuvC to scan DNA until it finds its consensus sequence, where it cleaves and resolves the cruciform DNA. The polypeptide is Holliday junction branch migration complex subunit RuvA (Exiguobacterium sibiricum (strain DSM 17290 / CCUG 55495 / CIP 109462 / JCM 13490 / 255-15)).